The following is a 90-amino-acid chain: Probable Fe(2+)-trafficking protein (90 aa).

This sequence belongs to the Fe(2+)-trafficking protein family.

Its function is as follows. Could be a mediator in iron transactions between iron acquisition and iron-requiring processes, such as synthesis and/or repair of Fe-S clusters in biosynthetic enzymes. The chain is Probable Fe(2+)-trafficking protein from Ectopseudomonas mendocina (strain ymp) (Pseudomonas mendocina).